Consider the following 161-residue polypeptide: Large ribosomal subunit protein uL15 (161 aa).

Positions 1–44 (MKLSEIADNAGSRKKRMRVGRGIGSGKGKTAGRGGKGQTARSGV) are disordered. Gly residues predominate over residues 21–37 (RGIGSGKGKTAGRGGKG).

Belongs to the universal ribosomal protein uL15 family. Part of the 50S ribosomal subunit.

Its function is as follows. Binds to the 23S rRNA. The sequence is that of Large ribosomal subunit protein uL15 from Rhodopseudomonas palustris (strain BisA53).